Here is a 324-residue protein sequence, read N- to C-terminus: o-succinylbenzoate synthase (324 aa).

Residue K135 is the Proton donor of the active site. Positions 163, 192, and 215 each coordinate Mg(2+). K237 acts as the Proton acceptor in catalysis.

It belongs to the mandelate racemase/muconate lactonizing enzyme family. MenC type 1 subfamily. The cofactor is a divalent metal cation.

It catalyses the reaction (1R,6R)-6-hydroxy-2-succinyl-cyclohexa-2,4-diene-1-carboxylate = 2-succinylbenzoate + H2O. Its pathway is quinol/quinone metabolism; 1,4-dihydroxy-2-naphthoate biosynthesis; 1,4-dihydroxy-2-naphthoate from chorismate: step 4/7. It functions in the pathway quinol/quinone metabolism; menaquinone biosynthesis. Its function is as follows. Converts 2-succinyl-6-hydroxy-2,4-cyclohexadiene-1-carboxylate (SHCHC) to 2-succinylbenzoate (OSB). The polypeptide is o-succinylbenzoate synthase (Aliivibrio salmonicida (strain LFI1238) (Vibrio salmonicida (strain LFI1238))).